The primary structure comprises 178 residues: NADH-quinone oxidoreductase subunit I 2 (178 aa).

4Fe-4S ferredoxin-type domains are found at residues 46–78 (IVLTRDPDGGERCVACYLCSAVCPVSCISMQAA) and 88–117 (AWFRINFARCIYCGLCEEACPTSAIQLTPF). Residues C58, C61, C64, C68, C97, C100, C103, and C107 each contribute to the [4Fe-4S] cluster site.

This sequence belongs to the complex I 23 kDa subunit family. In terms of assembly, NDH-1 is composed of 14 different subunits. Subunits NuoA, H, J, K, L, M, N constitute the membrane sector of the complex. The cofactor is [4Fe-4S] cluster.

The protein localises to the cell inner membrane. The catalysed reaction is a quinone + NADH + 5 H(+)(in) = a quinol + NAD(+) + 4 H(+)(out). NDH-1 shuttles electrons from NADH, via FMN and iron-sulfur (Fe-S) centers, to quinones in the respiratory chain. The immediate electron acceptor for the enzyme in this species is believed to be ubiquinone. Couples the redox reaction to proton translocation (for every two electrons transferred, four hydrogen ions are translocated across the cytoplasmic membrane), and thus conserves the redox energy in a proton gradient. This Syntrophobacter fumaroxidans (strain DSM 10017 / MPOB) protein is NADH-quinone oxidoreductase subunit I 2.